The following is a 584-amino-acid chain: NADPH-dependent diflavin oxidoreductase 1 (584 aa).

The Flavodoxin-like domain maps to 6-150 (IYILYGSETG…VFAYWCNHLY (145 aa)). Residues 12 to 17 (SETGTA), 59 to 62 (STTG), 97 to 106 (CGDTSYTRFN), and Glu132 contribute to the FMN site. Residues 199–436 (RGKIEATLVH…LPGFLNLSYQ (238 aa)) form the FAD-binding FR-type domain. FAD contacts are provided by residues Arg343, 373–376 (RQYS), and 407–410 (GICS). Residues Thr448, 503–504 (SR), and 509–513 (KKYVQ) each bind NADP(+). Trp584 contacts FAD.

It belongs to the NADPH-dependent diflavin oxidoreductase NDOR1 family. The protein in the N-terminal section; belongs to the flavodoxin family. In the C-terminal section; belongs to the flavoprotein pyridine nucleotide cytochrome reductase family. In terms of assembly, interacts with dre2; as part of the cytosolic iron-sulfur (Fe-S) protein assembly (CIA) machinery. FAD is required as a cofactor. It depends on FMN as a cofactor.

The protein resides in the cytoplasm. The protein localises to the mitochondrion. It carries out the reaction 2 oxidized [2Fe-2S]-[protein] + NADPH = 2 reduced [2Fe-2S]-[protein] + NADP(+) + H(+). In terms of biological role, NADPH-dependent reductase which is a central component of the cytosolic iron-sulfur (Fe-S) protein assembly (CIA) machinery. Transfers electrons from NADPH via its FAD and FMN prosthetic groups to the [2Fe-2S] cluster of dre2, another key component of the CIA machinery. In turn, this reduced cluster provides electrons for assembly of cytosolic iron-sulfur cluster proteins. Positively controls H(2)O(2)-induced cell death. The protein is NADPH-dependent diflavin oxidoreductase 1 of Schizosaccharomyces pombe (strain 972 / ATCC 24843) (Fission yeast).